Consider the following 334-residue polypeptide: Holliday junction branch migration complex subunit RuvB (334 aa).

A large ATPase domain (RuvB-L) region spans residues 4–184 (ADRLIQPQLQ…FGIPLRLEFY (181 aa)). ATP contacts are provided by residues arginine 24, glycine 65, lysine 68, threonine 69, threonine 70, 131–133 (EDY), arginine 174, tyrosine 184, and arginine 221. Threonine 69 lines the Mg(2+) pocket. Residues 185-255 (NVKDLSTIVS…VAEHALDLLD (71 aa)) form a small ATPAse domain (RuvB-S) region. The head domain (RuvB-H) stretch occupies residues 258-334 (GEGFDYMDRK…YLHFGMIKPE (77 aa)). The DNA site is built by arginine 294, arginine 313, and arginine 318.

Belongs to the RuvB family. In terms of assembly, homohexamer. Forms an RuvA(8)-RuvB(12)-Holliday junction (HJ) complex. HJ DNA is sandwiched between 2 RuvA tetramers; dsDNA enters through RuvA and exits via RuvB. An RuvB hexamer assembles on each DNA strand where it exits the tetramer. Each RuvB hexamer is contacted by two RuvA subunits (via domain III) on 2 adjacent RuvB subunits; this complex drives branch migration. In the full resolvosome a probable DNA-RuvA(4)-RuvB(12)-RuvC(2) complex forms which resolves the HJ.

The protein localises to the cytoplasm. The enzyme catalyses ATP + H2O = ADP + phosphate + H(+). The RuvA-RuvB-RuvC complex processes Holliday junction (HJ) DNA during genetic recombination and DNA repair, while the RuvA-RuvB complex plays an important role in the rescue of blocked DNA replication forks via replication fork reversal (RFR). RuvA specifically binds to HJ cruciform DNA, conferring on it an open structure. The RuvB hexamer acts as an ATP-dependent pump, pulling dsDNA into and through the RuvAB complex. RuvB forms 2 homohexamers on either side of HJ DNA bound by 1 or 2 RuvA tetramers; 4 subunits per hexamer contact DNA at a time. Coordinated motions by a converter formed by DNA-disengaged RuvB subunits stimulates ATP hydrolysis and nucleotide exchange. Immobilization of the converter enables RuvB to convert the ATP-contained energy into a lever motion, pulling 2 nucleotides of DNA out of the RuvA tetramer per ATP hydrolyzed, thus driving DNA branch migration. The RuvB motors rotate together with the DNA substrate, which together with the progressing nucleotide cycle form the mechanistic basis for DNA recombination by continuous HJ branch migration. Branch migration allows RuvC to scan DNA until it finds its consensus sequence, where it cleaves and resolves cruciform DNA. This chain is Holliday junction branch migration complex subunit RuvB, found in Shewanella sp. (strain MR-7).